The primary structure comprises 508 residues: Photosystem II CP47 reaction center protein (508 aa).

Transmembrane regions (helical) follow at residues 21–36 (SVHI…WAGS), 101–115 (IVFS…IWHW), 140–156 (GIHL…FGAF), 203–218 (IAAG…FHLS), 237–252 (VLSS…AFVV), and 457–472 (SFAL…HGAR).

This sequence belongs to the PsbB/PsbC family. PsbB subfamily. PSII is composed of 1 copy each of membrane proteins PsbA, PsbB, PsbC, PsbD, PsbE, PsbF, PsbH, PsbI, PsbJ, PsbK, PsbL, PsbM, PsbT, PsbX, PsbY, PsbZ, Psb30/Ycf12, at least 3 peripheral proteins of the oxygen-evolving complex and a large number of cofactors. It forms dimeric complexes. Binds multiple chlorophylls. PSII binds additional chlorophylls, carotenoids and specific lipids. serves as cofactor.

It is found in the plastid. Its subcellular location is the chloroplast thylakoid membrane. Functionally, one of the components of the core complex of photosystem II (PSII). It binds chlorophyll and helps catalyze the primary light-induced photochemical processes of PSII. PSII is a light-driven water:plastoquinone oxidoreductase, using light energy to abstract electrons from H(2)O, generating O(2) and a proton gradient subsequently used for ATP formation. The chain is Photosystem II CP47 reaction center protein from Nuphar advena (Common spatterdock).